Reading from the N-terminus, the 198-residue chain is TM2 domain-containing protein 2 (198 aa).

Positions 1–27 (MRWPVPPLGYLLLGGQGLLLTFSLISS) are cleaved as a signal peptide. Residues 28-128 (QNNTSPVTYP…FLRGNRPCIK (101 aa)) lie on the Extracellular side of the membrane. Residues Asn-29, Asn-40, and Asn-76 are each glycosylated (N-linked (GlcNAc...) asparagine). Residues 129–149 (YTGHYFITTLLYSFFLGCFGV) form a helical membrane-spanning segment. The 49-residue stretch at 131-179 (GHYFITTLLYSFFLGCFGVDRFCLGHTGTAVGKLLTWGGLGIWWFVDLI) folds into the TM2 domain. The Cytoplasmic segment spans residues 150–166 (DRFCLGHTGTAVGKLLT). Residues 167–187 (WGGLGIWWFVDLILLITGGLM) traverse the membrane as a helical segment. Residues 188–198 (PSDNSNWCTIY) lie on the Extracellular side of the membrane.

Belongs to the TM2 family.

It localises to the membrane. The polypeptide is TM2 domain-containing protein 2 (tm2d2) (Xenopus laevis (African clawed frog)).